The following is a 271-amino-acid chain: Protein FANTASTIC FOUR 1 (271 aa).

The region spanning 114 to 168 (NSFPPPLNSVNGFNNSRMVKSYKEDGRLVVQAIRVCSPPRCFVSERREGRLRLCL) is the FAF domain. The tract at residues 174–255 (NSQDAEEEFE…KRRCNENGCE (82 aa)) is disordered. A compositionally biased stretch (acidic residues) spans 177-224 (DAEEEFEEEDEDDQYDAEEEEEEEEEEEEEEEEEEEEEEEEEEEDEEG). Basic residues predominate over residues 237 to 247 (GNKKVSNRPKR).

The protein belongs to the fantastic four family. Expressed in the shoot apex, stamens, anthers and young siliques. Detected in provascular and vascular tissue.

Able to repress WUS when constitutively overexpressed, but have no effect on CLV3. This is Protein FANTASTIC FOUR 1 (FAF1) from Arabidopsis thaliana (Mouse-ear cress).